The following is a 518-amino-acid chain: MASTFNPRECKLSKEEGQNYGFFLRIEKDTEGHLVRVIEKGSPAEKAGLQDGDRVLRINGVFVDKEEHMQVVDLVRKSGNAVTLLVLDGNSYEKAVKKQVDLKELGQSRQEADLRDENVAPVMNGGVETWTQPRLCYLEKQGNSYGFSLKTVQGKKGVYMTDIIPQSVAMKAGVLADDHLIEVNGENVEDASHEEVVEKVKKSGNRIVFLLVDKETEKRHSEQKIEFRREAASLKLLPHQPRIVEMKKGSSGYGFYLKAGPEQRGQIIKDIDSGSPAEAAGLKNNDLVIAVNGKSVEALDHDGVVELIKKGGDQTSLLVVDKEADSMYRLAHFSPFLYYQSQELPNGSVTEVAAPTPVPPEVSSPDPTEEVEDHKPKLCRLDKGENGYGFHLNAIRGLPGSFVKEVQKGSPADLAGLEDEDIIIEVNGVNVLDEPYEKVVDRIQSSGDNVTLLVCGKKAYEYFQAKKIPIVSSMALPLAIPADSQGMLAELEYNLHEAKERAHSTASNSSSNSEDTEL.

Residues 9–90 (ECKLSKEEGQ…AVTLLVLDGN (82 aa)) form the PDZ 1 domain. Ser108, Ser148, Ser192, Ser250, Ser334, and Ser348 each carry phosphoserine. 2 consecutive PDZ domains span residues 135 to 215 (LCYL…VDKE) and 243 to 323 (IVEM…VDKE). Residues 378 to 458 (LCRLDKGENG…NVTLLVCGKK (81 aa)) enclose the PDZ 4 domain. Phosphothreonine is present on Thr451. Residues 499–518 (KERAHSTASNSSSNSEDTEL) form a disordered region. Ser507, Ser509, Ser510, Ser511, and Ser513 each carry phosphoserine. The span at 507-518 (SNSSSNSEDTEL) shows a compositional bias: low complexity.

It belongs to the NHER family. Interacts with PDZK1IP1 and ABCC2. Interacts (via PDZ domains 1 and 3) with SCARB1 (C-terminal domain). Forms a heterodimeric complex with NHERF1. Interacts with AKAP2, BCR, CFTR, SLCO1A1, SLC22A12, SLC22A4, SLC22A5, NHERF2 and SLC17A1. Component of a complex, composed of PDZK1, SYNGAP1, KLHL17 and NMDA receptors. Interacts (via PDZ1 domain) directly with KLHL17; the interaction is important for integrity of actin cytoskeleton structures in neurons. Interacts (via C-terminal PDZ domain) with SLC9A3 (via C-terminal domain). Interacts (via the first PDZ domain) with PTGIR (via non-isoprenylated C-terminus). Binds to the C-terminal region of SLC26A3. Interacts (via C-terminal PDZ domain) with SLC26A6 (via C-terminal domain). Interacts (via PDZ domains 1 and 3) with SLC5A8 (via PDZ-binding motif); interaction increases nicotinate transport activity of SLC5A8. In terms of tissue distribution, highly expressed in the brush border membrane of duodenal and ileal mucosa.

The protein localises to the membrane. It localises to the cell membrane. Functionally, a scaffold protein that connects plasma membrane proteins and regulatory components, regulating their surface expression in epithelial cells apical domains. May be involved in the coordination of a diverse range of regulatory processes for ion transport and second messenger cascades. In complex with NHERF1, may cluster proteins that are functionally dependent in a mutual fashion and modulate the trafficking and the activity of the associated membrane proteins. May play a role in the cellular mechanisms associated with multidrug resistance through its interaction with ABCC2 and PDZK1IP1. May potentiate the CFTR chloride channel activity. Required for normal cell-surface expression of SCARB1. Plays a role in maintaining normal plasma cholesterol levels via its effects on SCARB1. Plays a role in the normal localization and function of the chloride-anion exchanger SLC26A6 to the plasma membrane in the brush border of the proximal tubule of the kidney. May be involved in the regulation of proximal tubular Na(+)-dependent inorganic phosphate cotransport therefore playing an important role in tubule function. This is Na(+)/H(+) exchange regulatory cofactor NHE-RF3 (PDZK1) from Oryctolagus cuniculus (Rabbit).